The chain runs to 459 residues: Interleukin-1 receptor-associated kinase 4 (459 aa).

At M1 the chain carries N-acetylmethionine. The Death domain maps to 20–104 (RKLSDFIDPQ…APATLLLPDA (85 aa)). N6-acetyllysine is present on K34. Positions 115 to 161 (REAATVAQTHGPCQEKDRTSVMPMPKLEHSCEPPDSSSPDNRSVESS) are disordered. A Protein kinase domain is found at 186–454 (SAGGNRMGEG…PDIAKVQQLL (269 aa)). ATP-binding positions include 192–200 (MGEGGFGVV) and K213. D311 acts as the Proton acceptor in catalysis. ATP-binding positions include 313–316 (KSAN) and D329. T342 and T345 each carry phosphothreonine. At S346 the chain carries Phosphoserine.

This sequence belongs to the protein kinase superfamily. TKL Ser/Thr protein kinase family. Pelle subfamily. As to quaternary structure, associates with MYD88 and IRAK2 to form a ternary complex called the Myddosome. Once phosphorylated, IRAK4 dissociates from the receptor complex and then associates with the TNF receptor-associated factor 6 (TRAF6), IRAK1, and PELI1; this intermediate complex is required for subsequent NF-kappa-B activation. Direct binding of SMAD6 to PELI1 prevents complex formation and hence negatively regulates IL1R-TLR signaling and eventually NF-kappa-B-mediated gene expression. Interacts with IL1RL1. Interacts (when phosphorylated) with IRAK1. May interact (when phosphorylated) with IRAK3. The cofactor is Mg(2+). Phosphorylated.

Its subcellular location is the cytoplasm. The enzyme catalyses L-seryl-[protein] + ATP = O-phospho-L-seryl-[protein] + ADP + H(+). The catalysed reaction is L-threonyl-[protein] + ATP = O-phospho-L-threonyl-[protein] + ADP + H(+). In terms of biological role, serine/threonine-protein kinase that plays a critical role in initiating innate immune response against foreign pathogens. Involved in Toll-like receptor (TLR) and IL-1R signaling pathways. Is rapidly recruited by MYD88 to the receptor-signaling complex upon TLR activation to form the Myddosome together with IRAK2. Phosphorylates initially IRAK1, thus stimulating the kinase activity and intensive autophosphorylation of IRAK1. Phosphorylates E3 ubiquitin ligases Pellino proteins (PELI1, PELI2 and PELI3) to promote pellino-mediated polyubiquitination of IRAK1. Then, the ubiquitin-binding domain of IKBKG/NEMO binds to polyubiquitinated IRAK1 bringing together the IRAK1-MAP3K7/TAK1-TRAF6 complex and the NEMO-IKKA-IKKB complex. In turn, MAP3K7/TAK1 activates IKKs (CHUK/IKKA and IKBKB/IKKB) leading to NF-kappa-B nuclear translocation and activation. Alternatively, phosphorylates TIRAP to promote its ubiquitination and subsequent degradation. Phosphorylates NCF1 and regulates NADPH oxidase activation after LPS stimulation suggesting a similar mechanism during microbial infections. This chain is Interleukin-1 receptor-associated kinase 4 (Irak4), found in Mus musculus (Mouse).